The sequence spans 382 residues: Galactokinase (382 aa).

34-37 (EHTD) is a substrate binding site. 124 to 130 (GAGLSSS) provides a ligand contact to ATP. Mg(2+) is bound by residues Ser130 and Glu162. The active-site Proton acceptor is the Asp174. Residue Tyr223 participates in substrate binding.

This sequence belongs to the GHMP kinase family. GalK subfamily.

It is found in the cytoplasm. The catalysed reaction is alpha-D-galactose + ATP = alpha-D-galactose 1-phosphate + ADP + H(+). Its pathway is carbohydrate metabolism; galactose metabolism. Functionally, catalyzes the transfer of the gamma-phosphate of ATP to D-galactose to form alpha-D-galactose-1-phosphate (Gal-1-P). This Citrobacter koseri (strain ATCC BAA-895 / CDC 4225-83 / SGSC4696) protein is Galactokinase.